We begin with the raw amino-acid sequence, 170 residues long: Helix-loop-helix protein 3 (170 aa).

Low complexity predominate over residues 1–26; sequence MTASTSSTPSTSTKIPSSSKSSVTKQ. 2 disordered regions span residues 1–42 and 118–170; these read MTAS…VDQV and TPSP…TETY. A basic motif; degenerate region spans residues 26–39; the sequence is QTKQKRNERERKRV. Positions 26-79 constitute a bHLH domain; sequence QTKQKRNERERKRVDQVNQGFVLLQERVPKAAGNKAKLSKVETLREAARYIQEL. Residues 30 to 40 show a composition bias toward basic and acidic residues; sequence KRNERERKRVD. The segment at 40–79 is helix-loop-helix motif; the sequence is DQVNQGFVLLQERVPKAAGNKAKLSKVETLREAARYIQEL. Low complexity predominate over residues 143–157; sequence SHYYQESSSSSASTS.

Efficient DNA binding requires dimerization with another bHLH protein. Forms a heterodimer with hlh-2. Expressed in the ADL sensory neurons.

The protein localises to the nucleus. Probable transcriptional regulator. May mediate transcriptional activation by binding to the E-box motif 5'-CANNTG-3'. Plays a role in the differentiation of the hermaphrodite-specific motor neurons (HSN) that are required for normal egg laying. Might play a role in serotonin production by regulating expression of the tryptophan hydrolase tph-1 which catalyzes serotonin synthesis, in the HSN neurons. Also plays a role in HSN axon guidance towards the vulva and the ventral nerve cord, possibly by promoting the expression of the netrin receptor unc-40. Under feeding conditions, involved in the regulation of the srh-234 chemoreceptor encoding gene expression in the ADL sensory neurons. Together with hlh-2, involved in the induction of programmed cell death in the sister cells of the serotonergic neurosecretory motor (NSM) neurons, probably through the activation of egl-1 transcription. The chain is Helix-loop-helix protein 3 from Caenorhabditis elegans.